Consider the following 343-residue polypeptide: Probable 3',5'-cyclic-nucleotide phosphodiesterase (343 aa).

The N-terminal stretch at 1–36 (MKYLSIKSASDKIKSGLLKTGVILSFSLFSSLSTAA) is a signal peptide.

Belongs to the cyclic nucleotide phosphodiesterase class-II family.

Its subcellular location is the periplasm. The enzyme catalyses a nucleoside 3',5'-cyclic phosphate + H2O = a nucleoside 5'-phosphate + H(+). The sequence is that of Probable 3',5'-cyclic-nucleotide phosphodiesterase (cpdP) from Yersinia pestis.